We begin with the raw amino-acid sequence, 860 residues long: Leucine--tRNA ligase (860 aa).

The short motif at 42–52 (PYPSGRLHMGH) is the 'HIGH' region element. Positions 619–623 (KMSKS) match the 'KMSKS' region motif. K622 serves as a coordination point for ATP.

The protein belongs to the class-I aminoacyl-tRNA synthetase family.

It localises to the cytoplasm. It catalyses the reaction tRNA(Leu) + L-leucine + ATP = L-leucyl-tRNA(Leu) + AMP + diphosphate. The polypeptide is Leucine--tRNA ligase (Photorhabdus laumondii subsp. laumondii (strain DSM 15139 / CIP 105565 / TT01) (Photorhabdus luminescens subsp. laumondii)).